A 310-amino-acid chain; its full sequence is Glutaminase 1 (310 aa).

Substrate contacts are provided by S66, N117, E161, N168, Y192, Y244, and V262. K294 carries the post-translational modification N6-acetyllysine.

Belongs to the glutaminase family. Homotetramer.

The catalysed reaction is L-glutamine + H2O = L-glutamate + NH4(+). The sequence is that of Glutaminase 1 from Escherichia coli (strain K12).